Consider the following 340-residue polypeptide: Heat-inducible transcription repressor HrcA (340 aa).

Belongs to the HrcA family.

In terms of biological role, negative regulator of class I heat shock genes (grpE-dnaK-dnaJ and groELS operons). Prevents heat-shock induction of these operons. This Clavibacter michiganensis subsp. michiganensis (strain NCPPB 382) protein is Heat-inducible transcription repressor HrcA.